The chain runs to 1093 residues: Synaptopodin-2 (1093 aa).

An interaction with VPS18 region spans residues 1–180 (MGTGDFICIS…PDSQRGRVAE (180 aa)). Residues 6-88 (FICISMTGGA…SLQMLIKRPS (83 aa)) form the PDZ domain. Disordered stretches follow at residues 144 to 174 (ENQR…PDSQ) and 211 to 233 (ASGP…DPNL). Residues 222–233 (EKSKSPDPDPNL) show a composition bias toward basic and acidic residues. Phosphoserine occurs at positions 274, 310, 329, and 330. The interval 329-369 (SSEGTEQGEDPRSEKDHSRPHKHRARHARLRRSESLSEKQV) is disordered. Threonine 333 is modified (phosphothreonine). Residues 346–358 (SRPHKHRARHARL) are compositionally biased toward basic residues. Basic and acidic residues predominate over residues 359-369 (RRSESLSEKQV). The short motif at 398–406 (KKRRRRARK) is the Nuclear localization signal element. 3 interaction with ACTN2 regions span residues 481–663 (MEML…FYDS), 664–924 (SERI…PPVA), and 901–1093 (QSPT…VVEE). 2 disordered regions span residues 507 to 803 (AQKE…GTVV) and 834 to 870 (AVAS…GMSG). F-actin binding regions lie at residues 534–663 (TSYQ…FYDS) and 664–803 (SERI…GTVV). A phosphoserine mark is found at serine 548, serine 549, and serine 551. Composition is skewed to polar residues over residues 565–579 (PQQN…TANI) and 595–611 (SVNQ…NMTS). At serine 604 the chain carries Phosphoserine. Residues 607 to 811 (RNMTSPIADF…VVSSIKIAQP (205 aa)) are interaction with YWHAB. Threonine 610 carries the phosphothreonine modification. Serine 611 carries the phosphoserine modification. The interval 615-626 (DFPAPPPYSAVT) is interaction with BAG3. Pro residues-rich tracts occupy residues 617-630 (PAPP…PPPD) and 644-655 (AQPPPWPQPAPW). The short motif at 619 to 622 (PPPY) is the PPPY motif element. A Phosphotyrosine modification is found at tyrosine 622. The residue at position 626 (threonine 626) is a Phosphothreonine. Basic and acidic residues predominate over residues 663–674 (SSERIASRDERI). Residues 664–916 (SERIASRDER…LPASWKYSSN (253 aa)) form an F-actin bundling activity region. Phosphoserine occurs at positions 705 and 729. Residues 751–900 (AKQKTPPPVA…DTVQAHAARA (150 aa)) are actin binding. Residues threonine 755 and threonine 774 each carry the phosphothreonine modification. Positions 762–784 (KPAVKSSSSQPVTPVSPVWSPGV) are enriched in low complexity. Serine 777 and serine 781 each carry phosphoserine. Composition is skewed to polar residues over residues 793-803 (PTSNPSKGTVV) and 835-853 (VASQ…TVNA). The interaction with FLNC stretch occupies residues 810 to 1093 (QPSYPPARPA…QVWKPSVVEE (284 aa)). Residues serine 902, serine 906, and serine 910 each carry the phosphoserine modification. The disordered stretch occupies residues 937-956 (ALKSQPSAAQPSKMGKKKGK). The segment at 1000-1019 (LAMKQALPPRPVNAASPTNV) is interaction with ZYX. The residue at position 1015 (serine 1015) is a Phosphoserine. Positions 1041 to 1050 (SSPVSASPVP) are enriched in low complexity. The segment at 1041–1064 (SSPVSASPVPVGIPTSPKQESASS) is disordered. At serine 1056 the chain carries Phosphoserine.

This sequence belongs to the synaptopodin family. As to quaternary structure, may self-associate in muscle cells under oxidative stress. Binds F-actin. Interacts with ACTN2; ACTN2 is proposed to anchor SYOP2 at Z lines in mature myocytes. Interacts with AKAP6, PPP3CA and CAMK2A. Interacts (phosphorylated form) with YWHAB; YWHAB competes with ACTN2 for interaction with SYNPO2. Interacts with KPNA2; mediating nuclear import of SYNOP2; dependent on interaction with YWHAB. Interacts with IPO13; may be implicated in SYNOP2 nuclear import. Interacts with ZYX, FLNC, ILK. Interacts with BAG3 (via WW 1 domain). May associate with the CASA complex consisting of HSPA8, HSPB8 and BAG3. Interacts with VPS18. In terms of processing, phosphorylated by PKA, and by CaMK2 at multiple sites. Dephosphorylated by calcineurin; abrogating interaction with YWHAB and impairing nuclear import. Phosphorylated by ILK. Expressed in heart muscle. Isoform 5 is specifically expressed in skeletal muscle.

Its subcellular location is the nucleus. It localises to the cytoplasm. It is found in the cytoskeleton. The protein localises to the myofibril. The protein resides in the sarcomere. Its subcellular location is the z line. It localises to the cell junction. It is found in the focal adhesion. In terms of biological role, has an actin-binding and actin-bundling activity. Can induce the formation of F-actin networks in an isoform-specific manner. At the sarcomeric Z lines is proposed to act as adapter protein that links nascent myofibers to the sarcolemma via ZYX and may play a role in early assembly and stabilization of the Z lines. Involved in autophagosome formation. May play a role in chaperone-assisted selective autophagy (CASA) involved in Z lines maintenance in striated muscle under mechanical tension; may link the client-processing CASA chaperone machinery to a membrane-tethering and fusion complex providing autophagosome membranes. Involved in regulation of cell migration. May be a tumor suppressor. Involved in regulation of cell migration. Can induce formation of thick, irregular actin bundles in the cell body. Its function is as follows. Involved in regulation of cell migration. Can induce long, well-organized actin bundles frequently orientated in parallel along the long axis of the cell showing characteristics of contractile ventral stress fibers. Functionally, involved in regulation of cell migration. Can induce an amorphous actin meshwork throughout the cell body containing a mixture of long and short, randomly organized thick and thin actin bundles. In terms of biological role, can induce long, well-organized actin bundles frequently orientated in parallel along the long axis of the cell showing characteristics of contractile ventral stress fibers. Involved in regulation of cell migration in part dependent on the Rho-ROCK cascade; can promote formation of nascent focal adhesions, actin bundles at the leading cell edge and lamellipodia. Can induce formation of thick, irregular actin bundles in the cell body; the induced actin network is associated with enhanced cell migration in vitro. This is Synaptopodin-2 (SYNPO2) from Homo sapiens (Human).